The sequence spans 617 residues: Dihydroxy-acid dehydratase (617 aa).

A Mg(2+)-binding site is contributed by Asp-81. Cys-122 contributes to the [2Fe-2S] cluster binding site. Positions 123 and 124 each coordinate Mg(2+). Lys-124 bears the N6-carboxylysine mark. Cys-197 provides a ligand contact to [2Fe-2S] cluster. Glu-494 is a Mg(2+) binding site. The active-site Proton acceptor is Ser-520.

It belongs to the IlvD/Edd family. As to quaternary structure, homodimer. [2Fe-2S] cluster is required as a cofactor. It depends on Mg(2+) as a cofactor.

It catalyses the reaction (2R)-2,3-dihydroxy-3-methylbutanoate = 3-methyl-2-oxobutanoate + H2O. The enzyme catalyses (2R,3R)-2,3-dihydroxy-3-methylpentanoate = (S)-3-methyl-2-oxopentanoate + H2O. It participates in amino-acid biosynthesis; L-isoleucine biosynthesis; L-isoleucine from 2-oxobutanoate: step 3/4. Its pathway is amino-acid biosynthesis; L-valine biosynthesis; L-valine from pyruvate: step 3/4. In terms of biological role, functions in the biosynthesis of branched-chain amino acids. Catalyzes the dehydration of (2R,3R)-2,3-dihydroxy-3-methylpentanoate (2,3-dihydroxy-3-methylvalerate) into 2-oxo-3-methylpentanoate (2-oxo-3-methylvalerate) and of (2R)-2,3-dihydroxy-3-methylbutanoate (2,3-dihydroxyisovalerate) into 2-oxo-3-methylbutanoate (2-oxoisovalerate), the penultimate precursor to L-isoleucine and L-valine, respectively. The polypeptide is Dihydroxy-acid dehydratase (Frankia casuarinae (strain DSM 45818 / CECT 9043 / HFP020203 / CcI3)).